The sequence spans 81 residues: Large ribosomal subunit protein bL27 (81 aa).

The span at 1–11 (MATSKSGGSSK) shows a compositional bias: polar residues. Residues 1–23 (MATSKSGGSSKNGRDSISKRLGV) form a disordered region.

The protein belongs to the bacterial ribosomal protein bL27 family.

This is Large ribosomal subunit protein bL27 from Borrelia garinii subsp. bavariensis (strain ATCC BAA-2496 / DSM 23469 / PBi) (Borreliella bavariensis).